Here is a 37-residue protein sequence, read N- to C-terminus: MKIRASVRKICENCRLIRRRRRIMVVCSNPKHKQRQG.

The protein belongs to the bacterial ribosomal protein bL36 family.

It is found in the plastid. Its subcellular location is the chloroplast. The polypeptide is Large ribosomal subunit protein bL36c (rpl36) (Marchantia polymorpha (Common liverwort)).